Here is a 448-residue protein sequence, read N- to C-terminus: N-succinylarginine dihydrolase (448 aa).

Substrate-binding positions include 19–28 (GGLSYGNVAS), asparagine 110, and 137–138 (HR). Glutamate 174 is a catalytic residue. Arginine 214 provides a ligand contact to substrate. Histidine 250 is an active-site residue. Positions 252 and 365 each coordinate substrate. The Nucleophile role is filled by cysteine 371.

Belongs to the succinylarginine dihydrolase family. In terms of assembly, homodimer.

The enzyme catalyses N(2)-succinyl-L-arginine + 2 H2O + 2 H(+) = N(2)-succinyl-L-ornithine + 2 NH4(+) + CO2. Its pathway is amino-acid degradation; L-arginine degradation via AST pathway; L-glutamate and succinate from L-arginine: step 2/5. Its function is as follows. Catalyzes the hydrolysis of N(2)-succinylarginine into N(2)-succinylornithine, ammonia and CO(2). This Pseudomonas aeruginosa (strain UCBPP-PA14) protein is N-succinylarginine dihydrolase.